Reading from the N-terminus, the 121-residue chain is Large ribosomal subunit protein bL20 (121 aa).

It belongs to the bacterial ribosomal protein bL20 family.

In terms of biological role, binds directly to 23S ribosomal RNA and is necessary for the in vitro assembly process of the 50S ribosomal subunit. It is not involved in the protein synthesizing functions of that subunit. This is Large ribosomal subunit protein bL20 from Persephonella marina (strain DSM 14350 / EX-H1).